A 356-amino-acid chain; its full sequence is Histidinol-phosphate aminotransferase (356 aa).

Lysine 214 is modified (N6-(pyridoxal phosphate)lysine).

Belongs to the class-II pyridoxal-phosphate-dependent aminotransferase family. Histidinol-phosphate aminotransferase subfamily. In terms of assembly, homodimer. The cofactor is pyridoxal 5'-phosphate.

It catalyses the reaction L-histidinol phosphate + 2-oxoglutarate = 3-(imidazol-4-yl)-2-oxopropyl phosphate + L-glutamate. It participates in amino-acid biosynthesis; L-histidine biosynthesis; L-histidine from 5-phospho-alpha-D-ribose 1-diphosphate: step 7/9. This Escherichia coli (strain SMS-3-5 / SECEC) protein is Histidinol-phosphate aminotransferase.